Here is a 328-residue protein sequence, read N- to C-terminus: Malate dehydrogenase (328 aa).

12-18 (GAAGQIA) is an NAD(+) binding site. Substrate contacts are provided by Arg93 and Arg99. NAD(+)-binding positions include Asn106, Gln113, and 130–132 (VGN). Asn132 and Arg163 together coordinate substrate. The Proton acceptor role is filled by His188.

It belongs to the LDH/MDH superfamily. MDH type 2 family.

The catalysed reaction is (S)-malate + NAD(+) = oxaloacetate + NADH + H(+). Its function is as follows. Catalyzes the reversible oxidation of malate to oxaloacetate. In Burkholderia cenocepacia (strain HI2424), this protein is Malate dehydrogenase.